We begin with the raw amino-acid sequence, 109 residues long: Aquaporin-2 (109 aa).

Residues 1 to 6 (SIAFSK) are Cytoplasmic-facing. The helical transmembrane segment at 7-27 (AVFSEFLATLLFVFFGLGSAL) threads the bilayer. Residues 28–35 (NWPQALPS) lie on the Extracellular side of the membrane. The helical transmembrane segment at 36–54 (GLQIAMAFGLAIGTLVQTL) threads the bilayer. Over 55-59 (GHISG) the chain is Cytoplasmic. The discontinuously helical intramembrane region spans 60–69 (AHINPAVTVA). Positions 63–65 (NPA) match the NPA 1 motif. At 70-80 (CLVGCHVSFLR) the chain is on the cytoplasmic side. A helical transmembrane segment spans residues 81–102 (AIFYVAAQLLGAVAGAALLHEL). Residues 103–109 (TPPDIRG) lie on the Extracellular side of the membrane.

Belongs to the MIP/aquaporin (TC 1.A.8) family. As to quaternary structure, homotetramer. Serine phosphorylation is necessary and sufficient for expression at the apical membrane. Endocytosis is not phosphorylation-dependent. Post-translationally, N-glycosylated.

It localises to the apical cell membrane. Its subcellular location is the basolateral cell membrane. The protein localises to the cell membrane. It is found in the cytoplasmic vesicle membrane. The protein resides in the golgi apparatus. It localises to the trans-Golgi network membrane. The catalysed reaction is H2O(in) = H2O(out). It carries out the reaction glycerol(in) = glycerol(out). In terms of biological role, forms a water-specific channel that provides the plasma membranes of renal collecting duct with high permeability to water, thereby permitting water to move in the direction of an osmotic gradient. Plays an essential role in renal water homeostasis. Could also be permeable to glycerol. The protein is Aquaporin-2 of Orycteropus afer (Aardvark).